The chain runs to 265 residues: Small ribosomal subunit protein uS2 (265 aa).

The protein belongs to the universal ribosomal protein uS2 family.

The sequence is that of Small ribosomal subunit protein uS2 from Ligilactobacillus salivarius (strain UCC118) (Lactobacillus salivarius).